Consider the following 250-residue polypeptide: tRNA (guanine-N(1)-)-methyltransferase (250 aa).

S-adenosyl-L-methionine-binding positions include G116 and 136–141 (IGDYVL).

This sequence belongs to the RNA methyltransferase TrmD family. Homodimer.

It localises to the cytoplasm. The catalysed reaction is guanosine(37) in tRNA + S-adenosyl-L-methionine = N(1)-methylguanosine(37) in tRNA + S-adenosyl-L-homocysteine + H(+). In terms of biological role, specifically methylates guanosine-37 in various tRNAs. This Pseudomonas fluorescens (strain ATCC BAA-477 / NRRL B-23932 / Pf-5) protein is tRNA (guanine-N(1)-)-methyltransferase.